The chain runs to 444 residues: Transmembrane protein with metallophosphoesterase domain (444 aa).

Transmembrane regions (helical) follow at residues 7–27, 43–63, 87–107, 114–134, and 162–182; these read LSLGAKAALAAGTVFVSMIVS, LFRLQLALFVNSLMLLGSIYI, MVVAAFLALAHSSFFTMIFLV, FSLVAYTCLGAYVIMLCFLCV, and LALRPALAVMVTTVLSVVGLL. Residues aspartate 214, histidine 216, aspartate 246, asparagine 277, histidine 382, and histidine 384 each coordinate a divalent metal cation.

Belongs to the metallophosphoesterase superfamily. LOC643853 family. Requires a divalent metal cation as cofactor.

It is found in the membrane. The protein is Transmembrane protein with metallophosphoesterase domain (TMPPE) of Bos taurus (Bovine).